The sequence spans 394 residues: Exodeoxyribonuclease 7 large subunit (394 aa).

It belongs to the XseA family. As to quaternary structure, heterooligomer composed of large and small subunits.

The protein localises to the cytoplasm. It carries out the reaction Exonucleolytic cleavage in either 5'- to 3'- or 3'- to 5'-direction to yield nucleoside 5'-phosphates.. In terms of biological role, bidirectionally degrades single-stranded DNA into large acid-insoluble oligonucleotides, which are then degraded further into small acid-soluble oligonucleotides. This chain is Exodeoxyribonuclease 7 large subunit, found in Thermotoga petrophila (strain ATCC BAA-488 / DSM 13995 / JCM 10881 / RKU-1).